A 486-amino-acid chain; its full sequence is Membrane-bound lytic murein transglycosylase F (486 aa).

The signal sequence occupies residues 1–26; it reads MFSPMALRPRCAKWLIVTGLFLMLGA. Positions 27-267 are non-LT domain; sequence CVEKPSTLER…RLKDRYYGHV (241 aa). The tract at residues 268–486 is LT domain; the sequence is DVLGYVGAYT…TKPPEENPPL (219 aa). Glu-314 is an active-site residue. Positions 464–486 are disordered; sequence VAEGNLHVPGVNKTKPPEENPPL.

In the N-terminal section; belongs to the bacterial solute-binding protein 3 family. It in the C-terminal section; belongs to the transglycosylase Slt family.

It is found in the cell outer membrane. It catalyses the reaction Exolytic cleavage of the (1-&gt;4)-beta-glycosidic linkage between N-acetylmuramic acid (MurNAc) and N-acetylglucosamine (GlcNAc) residues in peptidoglycan, from either the reducing or the non-reducing ends of the peptidoglycan chains, with concomitant formation of a 1,6-anhydrobond in the MurNAc residue.. Murein-degrading enzyme that degrades murein glycan strands and insoluble, high-molecular weight murein sacculi, with the concomitant formation of a 1,6-anhydromuramoyl product. Lytic transglycosylases (LTs) play an integral role in the metabolism of the peptidoglycan (PG) sacculus. Their lytic action creates space within the PG sacculus to allow for its expansion as well as for the insertion of various structures such as secretion systems and flagella. The chain is Membrane-bound lytic murein transglycosylase F from Pseudomonas fluorescens (strain ATCC BAA-477 / NRRL B-23932 / Pf-5).